The following is a 449-amino-acid chain: Sensor protein QseC (449 aa).

At 1–12 (MKFTQRLSLRVR) the chain is on the cytoplasmic side. The chain crosses the membrane as a helical span at residues 13–33 (LTLIFLILASVTWLLSSFVAW). Topologically, residues 34–156 (KQTTDNVDEL…QEWEYREDMA (123 aa)) are periplasmic. Residues 157–177 (LAIVAGQLIPWLVALPVMLII) form a helical membrane-spanning segment. Over 178–449 (MMVLLGRELA…QGGFEAKVSW (272 aa)) the chain is Cytoplasmic. The Histidine kinase domain maps to 243 to 449 (DAAHELRSPL…QGGFEAKVSW (207 aa)). The residue at position 246 (H246) is a Phosphohistidine; by autocatalysis.

The protein resides in the cell inner membrane. The catalysed reaction is ATP + protein L-histidine = ADP + protein N-phospho-L-histidine.. Member of a two-component regulatory system QseB/QseC. Activates the flagella regulon by activating transcription of FlhDC. May activate QseB by phosphorylation. The chain is Sensor protein QseC (qseC) from Escherichia coli O157:H7.